A 115-amino-acid chain; its full sequence is Large ribosomal subunit protein bL20 (115 aa).

Belongs to the bacterial ribosomal protein bL20 family.

In terms of biological role, binds directly to 23S ribosomal RNA and is necessary for the in vitro assembly process of the 50S ribosomal subunit. It is not involved in the protein synthesizing functions of that subunit. The protein is Large ribosomal subunit protein bL20 of Salinibacter ruber (strain DSM 13855 / M31).